A 305-amino-acid chain; its full sequence is tRNA pseudouridine synthase B (305 aa).

Asp-48 serves as the catalytic Nucleophile.

Belongs to the pseudouridine synthase TruB family. Type 1 subfamily.

It carries out the reaction uridine(55) in tRNA = pseudouridine(55) in tRNA. Its function is as follows. Responsible for synthesis of pseudouridine from uracil-55 in the psi GC loop of transfer RNAs. In Stutzerimonas stutzeri (strain A1501) (Pseudomonas stutzeri), this protein is tRNA pseudouridine synthase B.